We begin with the raw amino-acid sequence, 139 residues long: Large ribosomal subunit protein uL16 (139 aa).

The segment covering 1 to 16 (MLIPKRTKYRKQHRPV) has biased composition (basic residues). The interval 1-22 (MLIPKRTKYRKQHRPVRSGMSK) is disordered.

It belongs to the universal ribosomal protein uL16 family. Part of the 50S ribosomal subunit.

Its function is as follows. Binds 23S rRNA and is also seen to make contacts with the A and possibly P site tRNAs. This is Large ribosomal subunit protein uL16 from Bifidobacterium longum subsp. infantis (strain ATCC 15697 / DSM 20088 / JCM 1222 / NCTC 11817 / S12).